The sequence spans 431 residues: O-methyltransferase gliM (431 aa).

A coiled-coil region spans residues 20–85; the sequence is EFKAIVNDLR…SMDKLQLQLV (66 aa). S-adenosyl-L-methionine contacts are provided by residues D287 and 319–321; that span reads GDF. The active-site Proton acceptor is H338.

This sequence belongs to the class I-like SAM-binding methyltransferase superfamily. Cation-independent O-methyltransferase family. COMT subfamily.

It participates in mycotoxin biosynthesis. Functionally, O-methyltransferase; part of the gene cluster that mediates the biosynthesis of gliotoxin, a member of the epipolythiodioxopiperazine (ETP) class of toxins characterized by a disulfide bridged cyclic dipeptide. The first step in gliotoxin biosynthesis is the condensation of serine and phenylalanine to form the cyclo-L-phenylalanyl-L-serine diketopiperazine (DKP) by the NRPS gliP. GliP is also able to produce the DKP cyclo-L-tryptophanyl-L-serine, suggesting that the substrate specificity of the first adenylation (A) domain in gliP is sufficiently relaxed to accommodate both L-Phe and L-Trp. The cytochrome P450 monooxygenase gliC has been shown to catalyze the subsequent hydroxylation of the alpha-carbon of L-Phe in cyclo-L-phenylalanyl-L-serine whereas the second cytochrome P450 enzyme, gliF, is presumably involved in the modification of the DKP side chain. The glutathione S-transferase (GST) gliG then forms a bis-glutathionylated biosynthetic intermediate which is responsible for the sulfurization of gliotoxin. This bis-glutathionylated intermediate is subsequently processed by the gamma-glutamyl cyclotransferase gliK to remove both gamma-glutamyl moieties. Subsequent processing via gliI yields a biosynthetic intermediate, which is N-methylated via the N-methyltransferase gliN, before the gliotoxin oxidoreductase gliT-mediated disulfide bridge closure. GliN-mediated amide methylation confers stability to ETP, damping the spontaneous formation of tri- and tetrasulfides. Intracellular dithiol gliotoxin oxidized by gliT is subsequently effluxed by gliA. Gliotoxin contributes to pathogenesis during invasive aspergillosis. In macrophages and neutrophils, gliotoxin showed inhibition of various different cell functions including cytokine production, antigen presentation, phagocytosis, and production of reactive oxygen species. This chain is O-methyltransferase gliM, found in Aspergillus fumigatus (strain ATCC MYA-4609 / CBS 101355 / FGSC A1100 / Af293) (Neosartorya fumigata).